The chain runs to 139 residues: Plastocyanin (139 aa).

The first 34 residues, 1–34, serve as a signal peptide directing secretion; sequence MKLIAQISRSLSLALFALVLMVGSFVAVMSPAAA. Residues 35-139 form the Plastocyanin-like domain; it reads ETFTVKMGAD…GMVGKITVEG (105 aa). Cu cation-binding residues include histidine 73, cysteine 123, histidine 126, and methionine 131.

Belongs to the plastocyanin family. Cu(2+) serves as cofactor.

The protein localises to the cellular thylakoid membrane. Participates in electron transfer between P700 and the cytochrome b6-f complex in photosystem I. The protein is Plastocyanin (petE) of Leptolyngbya laminosa (Phormidium laminosum).